The sequence spans 92 residues: Small ribosomal subunit protein uS19 (92 aa).

The protein belongs to the universal ribosomal protein uS19 family.

In terms of biological role, protein S19 forms a complex with S13 that binds strongly to the 16S ribosomal RNA. The chain is Small ribosomal subunit protein uS19 from Nostoc punctiforme (strain ATCC 29133 / PCC 73102).